Here is a 315-residue protein sequence, read N- to C-terminus: Hydrogenase-4 component C (315 aa).

The Periplasmic portion of the chain corresponds to 1 to 10 (MRQTLCDGYL). The helical transmembrane segment at 11 to 31 (VIFALAQAVILLMLTPLFTGI) threads the bilayer. At 32–73 (SRQIRARMHSRRGPGIWQDYRDIHKLFKRQEVAPTSSGLMFR) the chain is on the cytoplasmic side. A helical membrane pass occupies residues 74-94 (LMPWVLISSMLVLAMALPLFI). At 95-98 (TVSP) the chain is on the periplasmic side. A helical membrane pass occupies residues 99–119 (FAGGGDLITLIYLLALFRFFF). Residues 120–140 (ALSGLDTGSPFAGVGASRELT) lie on the Cytoplasmic side of the membrane. The helical transmembrane segment at 141–161 (LGILVEPMLILSLLVLALIAG) threads the bilayer. Residues 162–181 (STHIEMISNTLAMGWNSPLT) lie on the Periplasmic side of the membrane. Residues 182-202 (TVLALLACGFACFIEMGKIPF) traverse the membrane as a helical segment. Residues 203-228 (DVAEAEQELQEGPLTEYSGAGLALAK) lie on the Cytoplasmic side of the membrane. A helical membrane pass occupies residues 229–249 (WGLGLKQVVMASLFVALFLPF). The Periplasmic segment spans residues 250–256 (GRAQELS). A helical membrane pass occupies residues 257-277 (LACLLTSLVVTLLKVLLIFVL). Over 278–289 (ASIAENTLARGR) the chain is Cytoplasmic. A helical transmembrane segment spans residues 290 to 310 (FLLIHHVTWLGFSLAALAWVF). At 311-315 (WLTGL) the chain is on the periplasmic side.

It belongs to the complex I subunit 1 family.

It is found in the cell inner membrane. Functionally, possible component of hydrogenase 4. This Escherichia coli (strain K12) protein is Hydrogenase-4 component C.